The following is a 329-amino-acid chain: MAQSTLYSRVLGTGSYLPPDRVTNQQLTDRLAKEGIETSDEWIVARTGIHARHFAAPDVTTSDLALEASRRAIEAAGVDPQSIDLIIVATSTPDFVFPSTACLLQNKLGIKNGGAAFDVQAVCSGFAYAMATADSFIRSGQHRTALIVGAETFSRILDFKDRTTCVLFGDGAGAVILSASEEPGVLGSALHADGSYSNILCTPGNVNRGVIDGSAFLHMDGQAVFKLAVNVLEKVAIEALAKANLAPEQIDWLIPHQANIRIMTSTCRKLGLPQERMVVTVDQHGNTSAASIPLALDAAVRDGRIQRGQHVLIEGVGGGFTWGASVFRF.

Active-site residues include Cys123 and His256. Residues 257–261 (QANIR) are ACP-binding. The active site involves Asn286.

This sequence belongs to the thiolase-like superfamily. FabH family. Homodimer.

It localises to the cytoplasm. The enzyme catalyses malonyl-[ACP] + acetyl-CoA + H(+) = 3-oxobutanoyl-[ACP] + CO2 + CoA. Its pathway is lipid metabolism; fatty acid biosynthesis. Functionally, catalyzes the condensation reaction of fatty acid synthesis by the addition to an acyl acceptor of two carbons from malonyl-ACP. Catalyzes the first condensation reaction which initiates fatty acid synthesis and may therefore play a role in governing the total rate of fatty acid production. Possesses both acetoacetyl-ACP synthase and acetyl transacylase activities. Its substrate specificity determines the biosynthesis of branched-chain and/or straight-chain of fatty acids. The protein is Beta-ketoacyl-[acyl-carrier-protein] synthase III of Burkholderia cenocepacia (strain HI2424).